A 129-amino-acid polypeptide reads, in one-letter code: Ribonuclease P protein component (129 aa).

Belongs to the RnpA family. In terms of assembly, consists of a catalytic RNA component (M1 or rnpB) and a protein subunit.

It carries out the reaction Endonucleolytic cleavage of RNA, removing 5'-extranucleotides from tRNA precursor.. RNaseP catalyzes the removal of the 5'-leader sequence from pre-tRNA to produce the mature 5'-terminus. It can also cleave other RNA substrates such as 4.5S RNA. The protein component plays an auxiliary but essential role in vivo by binding to the 5'-leader sequence and broadening the substrate specificity of the ribozyme. The chain is Ribonuclease P protein component from Corynebacterium jeikeium (strain K411).